Here is a 293-residue protein sequence, read N- to C-terminus: Homoserine kinase (293 aa).

84–94 contributes to the ATP binding site; the sequence is PLSRGLGSSSA.

It belongs to the GHMP kinase family. Homoserine kinase subfamily.

It is found in the cytoplasm. The catalysed reaction is L-homoserine + ATP = O-phospho-L-homoserine + ADP + H(+). The protein operates within amino-acid biosynthesis; L-threonine biosynthesis; L-threonine from L-aspartate: step 4/5. In terms of biological role, catalyzes the ATP-dependent phosphorylation of L-homoserine to L-homoserine phosphate. The protein is Homoserine kinase of Nautilia profundicola (strain ATCC BAA-1463 / DSM 18972 / AmH).